Reading from the N-terminus, the 516-residue chain is NAD(P)H-quinone oxidoreductase chain 4, chloroplastic (516 aa).

The next 14 membrane-spanning stretches (helical) occupy residues Phe-4–Leu-24, Leu-37–Leu-57, Ile-87–Val-107, Ala-111–Ser-131, Leu-134–Met-154, Phe-167–Leu-187, Ala-208–Ile-228, His-242–Val-262, Ala-272–Ala-292, Ile-305–Asp-325, Gly-330–Gly-350, Leu-386–Thr-406, Ile-416–Met-436, and Leu-462–Val-482.

Belongs to the complex I subunit 4 family.

Its subcellular location is the plastid. The protein localises to the chloroplast thylakoid membrane. The catalysed reaction is a plastoquinone + NADH + (n+1) H(+)(in) = a plastoquinol + NAD(+) + n H(+)(out). It catalyses the reaction a plastoquinone + NADPH + (n+1) H(+)(in) = a plastoquinol + NADP(+) + n H(+)(out). The chain is NAD(P)H-quinone oxidoreductase chain 4, chloroplastic from Oenothera argillicola (Appalachian evening primrose).